The primary structure comprises 425 residues: UDP-sugar transporter protein SLC35A5 (425 aa).

The Cytoplasmic segment spans residues 1-7 (MESNCGH). Residues 8 to 28 (PMLSVSSAMYTFLLGAIFITL) traverse the membrane as a helical segment. Over 29-52 (SSSRILLVKYSANEENKYDYLPTT) the chain is Lumenal. A helical transmembrane segment spans residues 53-73 (VNVCSELVKLVFCALVSFWVL). The Cytoplasmic portion of the chain corresponds to 74 to 92 (KKEDHQNRKLRCGSWKEFF). Residues 93 to 115 (NFMKWSIPAFLYFLDNLIVFYVL) traverse the membrane as a helical segment. Topologically, residues 116-119 (SYLQ) are lumenal. Residues 120-142 (PAMAVIFSNFSIITTALLFRIVL) traverse the membrane as a helical segment. The Cytoplasmic portion of the chain corresponds to 143–147 (KRHLN). The helical transmembrane segment at 148–168 (GIQWASLLILFLSIVALTSGT) threads the bilayer. The Lumenal portion of the chain corresponds to 169–228 (ETSQHSLAGHGFHHDALFSPSNSCLLFRSECPRKDNCTAKEWTFSEAQWNTTARVFSHIR). Asparagine 204 and asparagine 218 each carry an N-linked (GlcNAc...) asparagine glycan. A helical transmembrane segment spans residues 229–249 (LGLGHVLIIVQCFISSMANIY). The Cytoplasmic segment spans residues 250 to 263 (NEKILKEGNQLTES). A helical transmembrane segment spans residues 264–284 (IFVQNSKLYFFGVLFNGLTLG). Over 285-303 (LQSGNRDQIKNCGIFYGHN) the chain is Lumenal. The helical transmembrane segment at 304–324 (AFSVALIFVTAFQGLSVAFIL) threads the bilayer. Residues 325 to 330 (KFLDNM) are Cytoplasmic-facing. Residues 331–351 (FHVLMAQVTTVVITTVSVLVF) form a helical membrane-spanning segment. Topologically, residues 352-354 (DFR) are lumenal. Residues 355 to 375 (PSLEFFLEAPSVLLSILIYNA) traverse the membrane as a helical segment. Residues 376-425 (SNPQGVENVPRKERIRDLSGTLWERSSGDGEELERLTKPKSDIESDEDTF) lie on the Cytoplasmic side of the membrane. A phosphoserine mark is found at serine 394, serine 416, and serine 420. The segment at 398–425 (WERSSGDGEELERLTKPKSDIESDEDTF) is disordered. Over residues 408–418 (LERLTKPKSDI) the composition is skewed to basic and acidic residues.

Belongs to the nucleotide-sugar transporter family. SLC35A subfamily. As to quaternary structure, probably forms homooligomers and heterooligomers with SLC35A1, SLC35A2, SLC35A3 and SLC35A4.

The protein resides in the golgi apparatus membrane. It carries out the reaction UMP(out) + UDP-alpha-D-glucuronate(in) = UMP(in) + UDP-alpha-D-glucuronate(out). The enzyme catalyses UMP(out) + UDP-N-acetyl-alpha-D-glucosamine(in) = UMP(in) + UDP-N-acetyl-alpha-D-glucosamine(out). It catalyses the reaction UDP-N-acetyl-alpha-D-galactosamine(in) + UMP(out) = UDP-N-acetyl-alpha-D-galactosamine(out) + UMP(in). Functionally, probable UDP-sugar:UMP transmembrane antiporter involved in UDP-alpha-D-glucuronate/UDP-GlcA, UDP-GlcNAc/UDP-N-acetyl-alpha-D-glucosamine and UDP-N-acetyl-alpha-D-galactosamine/UDP-GalNAc transport from the cytosol to the lumen of the Golgi. This is UDP-sugar transporter protein SLC35A5 from Bos taurus (Bovine).